The chain runs to 338 residues: Aspartate carbamoyltransferase catalytic subunit (338 aa).

Carbamoyl phosphate is bound by residues arginine 59 and threonine 60. L-aspartate is bound at residue lysine 87. Residues arginine 109, histidine 142, and glutamine 145 each contribute to the carbamoyl phosphate site. L-aspartate contacts are provided by arginine 182 and arginine 253. Carbamoyl phosphate is bound by residues glycine 294 and proline 295.

Belongs to the aspartate/ornithine carbamoyltransferase superfamily. ATCase family. Heterododecamer (2C3:3R2) of six catalytic PyrB chains organized as two trimers (C3), and six regulatory PyrI chains organized as three dimers (R2).

It catalyses the reaction carbamoyl phosphate + L-aspartate = N-carbamoyl-L-aspartate + phosphate + H(+). The protein operates within pyrimidine metabolism; UMP biosynthesis via de novo pathway; (S)-dihydroorotate from bicarbonate: step 2/3. Catalyzes the condensation of carbamoyl phosphate and aspartate to form carbamoyl aspartate and inorganic phosphate, the committed step in the de novo pyrimidine nucleotide biosynthesis pathway. This Prochlorococcus marinus (strain MIT 9301) protein is Aspartate carbamoyltransferase catalytic subunit.